The sequence spans 362 residues: NAD(P)H-quinone oxidoreductase subunit 1, chloroplastic (362 aa).

8 consecutive transmembrane segments (helical) span residues 27–47, 94–114, 128–148, 164–184, 202–222, 247–267, 303–323, and 335–355; these read IWILPILTLLLGITIEVLVIV, IPLFSIGPSIAVISILLSFLV, IGVFLWIAISSIAPIGLLMAG, AAQSISYEIPLTFCVLAISLL, FFGWNLWRQPIGFLVFLISSL, YSGIKYGLFYLVSYLNLLVSS, TMSIFITLTKAYLFLFISITI, and LLNLGWKFLLPISLGNLLLTT.

The protein belongs to the complex I subunit 1 family. NDH is composed of at least 16 different subunits, 5 of which are encoded in the nucleus.

The protein localises to the plastid. Its subcellular location is the chloroplast thylakoid membrane. The enzyme catalyses a plastoquinone + NADH + (n+1) H(+)(in) = a plastoquinol + NAD(+) + n H(+)(out). The catalysed reaction is a plastoquinone + NADPH + (n+1) H(+)(in) = a plastoquinol + NADP(+) + n H(+)(out). Its function is as follows. NDH shuttles electrons from NAD(P)H:plastoquinone, via FMN and iron-sulfur (Fe-S) centers, to quinones in the photosynthetic chain and possibly in a chloroplast respiratory chain. The immediate electron acceptor for the enzyme in this species is believed to be plastoquinone. Couples the redox reaction to proton translocation, and thus conserves the redox energy in a proton gradient. This Oryza sativa (Rice) protein is NAD(P)H-quinone oxidoreductase subunit 1, chloroplastic (ndhA).